The chain runs to 382 residues: Beta-1,4-galactosyltransferase 6 (382 aa).

The Cytoplasmic segment spans residues 1-14 (MSVLRRMMRVSNRS). Residues 15–35 (LLAFIFFFSLSSSCLYFIYVA) traverse the membrane as a helical; Signal-anchor for type II membrane protein segment. Over 36–382 (PGIANTYLFM…MPELAPIEDY (347 aa)) the chain is Lumenal. Residues Asn-71, Asn-75, Asn-83, Asn-84, Asn-99, and Asn-122 are each glycosylated (N-linked (GlcNAc...) asparagine). Cys-108 and Cys-152 form a disulfide bridge. UDP-alpha-D-galactose is bound by residues 163 to 167 (PFRNR), 202 to 204 (FNR), 229 to 230 (VD), Tyr-258, and Trp-290. An intrachain disulfide couples Cys-223 to Cys-242. Asp-230 is a binding site for Mn(2+). 292-295 (GEDD) serves as a coordination point for N-acetyl-D-glucosamine. N-linked (GlcNAc...) asparagine glycosylation occurs at Asn-307. Mn(2+) is bound at residue His-323. Residue 323–324 (HH) coordinates UDP-alpha-D-galactose. Arg-334 serves as a coordination point for N-acetyl-D-glucosamine. Residue Asn-367 is glycosylated (N-linked (GlcNAc...) asparagine).

Belongs to the glycosyltransferase 7 family. Requires Mn(2+) as cofactor. The cofactor is Mg(2+). In terms of tissue distribution, high expression in brain and adrenal gland, lower in liver, lung, colon and peripheral white blood cells.

The protein resides in the golgi apparatus. It localises to the golgi stack membrane. The catalysed reaction is a beta-D-glucosyl-(1&lt;-&gt;1')-N-acylsphing-4-enine + UDP-alpha-D-galactose = a beta-D-Gal-(1-&gt;4)-beta-D-Glc-(1&lt;-&gt;1)-Cer(d18:1(4E)) + UDP + H(+). It participates in protein modification; protein glycosylation. It functions in the pathway sphingolipid metabolism. Its activity is regulated as follows. Inhibited by EDTA. Functionally, catalyzes the synthesis of lactosylceramide (LacCer) via the transfer of galactose from UDP-galactose to glucosylceramide (GlcCer). LacCer is the starting point in the biosynthesis of all gangliosides (membrane-bound glycosphingolipids) which play pivotal roles in the CNS including neuronal maturation and axonal and myelin formation. The sequence is that of Beta-1,4-galactosyltransferase 6 from Homo sapiens (Human).